A 453-amino-acid chain; its full sequence is Trigger factor (453 aa).

In terms of domain architecture, PPIase FKBP-type spans 171 to 256; it reads GDRVTISFKG…ASLIEAPQDI (86 aa).

Belongs to the FKBP-type PPIase family. Tig subfamily.

Its subcellular location is the cytoplasm. It catalyses the reaction [protein]-peptidylproline (omega=180) = [protein]-peptidylproline (omega=0). Involved in protein export. Acts as a chaperone by maintaining the newly synthesized protein in an open conformation. Functions as a peptidyl-prolyl cis-trans isomerase. The polypeptide is Trigger factor (Nitrobacter hamburgensis (strain DSM 10229 / NCIMB 13809 / X14)).